Consider the following 196-residue polypeptide: Protein kinase OspG (196 aa).

This sequence belongs to the protein kinase superfamily. In terms of processing, autophosphorylated.

It is found in the secreted. It localises to the host cell. Functionally, effector proteins function to alter host cell physiology and promote bacterial survival in host tissues. This protein is a kinase that is involved in down-regulation of the host innate response induced by invasive bacteria. The polypeptide is Protein kinase OspG (ospG) (Shigella flexneri serotype X (strain 2002017)).